The following is a 341-amino-acid chain: Methionine import ATP-binding protein MetN 1 (341 aa).

In terms of domain architecture, ABC transporter spans 2–241 (IEFRQVSKSF…PKTTIAQNFV (240 aa)). Position 38 to 45 (38 to 45 (GYSGAGKS)) interacts with ATP.

Belongs to the ABC transporter superfamily. Methionine importer (TC 3.A.1.24) family. As to quaternary structure, the complex is composed of two ATP-binding proteins (MetN), two transmembrane proteins (MetI) and a solute-binding protein (MetQ).

Its subcellular location is the cell membrane. It carries out the reaction L-methionine(out) + ATP + H2O = L-methionine(in) + ADP + phosphate + H(+). The catalysed reaction is D-methionine(out) + ATP + H2O = D-methionine(in) + ADP + phosphate + H(+). Its function is as follows. Part of the ABC transporter complex MetNIQ involved in methionine import. Responsible for energy coupling to the transport system. The polypeptide is Methionine import ATP-binding protein MetN 1 (Staphylococcus aureus (strain MRSA252)).